Here is a 444-residue protein sequence, read N- to C-terminus: Probable glycine dehydrogenase (decarboxylating) subunit 1 (444 aa).

Belongs to the GcvP family. N-terminal subunit subfamily. In terms of assembly, the glycine cleavage system is composed of four proteins: P, T, L and H. In this organism, the P 'protein' is a heterodimer of two subunits.

The enzyme catalyses N(6)-[(R)-lipoyl]-L-lysyl-[glycine-cleavage complex H protein] + glycine + H(+) = N(6)-[(R)-S(8)-aminomethyldihydrolipoyl]-L-lysyl-[glycine-cleavage complex H protein] + CO2. In terms of biological role, the glycine cleavage system catalyzes the degradation of glycine. The P protein binds the alpha-amino group of glycine through its pyridoxal phosphate cofactor; CO(2) is released and the remaining methylamine moiety is then transferred to the lipoamide cofactor of the H protein. This Moorella thermoacetica (strain ATCC 39073 / JCM 9320) protein is Probable glycine dehydrogenase (decarboxylating) subunit 1.